A 330-amino-acid polypeptide reads, in one-letter code: Anthranilate phosphoribosyltransferase (330 aa).

Residues Gly-79, 82–83 (GD), Thr-87, 89–92 (NIST), 107–115 (KHGNYGVSS), and Ser-119 contribute to the 5-phospho-alpha-D-ribose 1-diphosphate site. Gly-79 lines the anthranilate pocket. Ser-91 is a Mg(2+) binding site. Asn-110 provides a ligand contact to anthranilate. Anthranilate is bound at residue Arg-165. 2 residues coordinate Mg(2+): Asp-223 and Glu-224.

It belongs to the anthranilate phosphoribosyltransferase family. In terms of assembly, homodimer. Mg(2+) is required as a cofactor.

The catalysed reaction is N-(5-phospho-beta-D-ribosyl)anthranilate + diphosphate = 5-phospho-alpha-D-ribose 1-diphosphate + anthranilate. Its pathway is amino-acid biosynthesis; L-tryptophan biosynthesis; L-tryptophan from chorismate: step 2/5. In terms of biological role, catalyzes the transfer of the phosphoribosyl group of 5-phosphorylribose-1-pyrophosphate (PRPP) to anthranilate to yield N-(5'-phosphoribosyl)-anthranilate (PRA). This chain is Anthranilate phosphoribosyltransferase, found in Flavobacterium psychrophilum (strain ATCC 49511 / DSM 21280 / CIP 103535 / JIP02/86).